We begin with the raw amino-acid sequence, 298 residues long: HTH-type transcriptional regulator ArgP (298 aa).

Positions 4 to 60 (LDYKWIEALDAVVYQGSFERAAEHLFVSQSAISQRIKQLEKFLAQPVLIREQPPKPT) constitute an HTH lysR-type domain. Positions 21 to 40 (FERAAEHLFVSQSAISQRIK) form a DNA-binding region, H-T-H motif.

This sequence belongs to the LysR transcriptional regulatory family. As to quaternary structure, homodimer.

Its function is as follows. Controls the transcription of genes involved in arginine and lysine metabolism. The polypeptide is HTH-type transcriptional regulator ArgP (Vibrio parahaemolyticus serotype O3:K6 (strain RIMD 2210633)).